A 453-amino-acid chain; its full sequence is Dibenzothiophene-sulfone monooxygenase (453 aa).

Residues aspartate 59, threonine 106, histidine 156, tyrosine 160, and serine 231 each coordinate FMN.

It belongs to the NtaA/SnaA/DszA monooxygenase family. As to quaternary structure, homodimer.

It is found in the cytoplasm. It carries out the reaction dibenzothiophene 5,5-dioxide + FMNH2 + NADH + O2 = 2'-hydroxybiphenyl-2-sulfinate + FMN + NAD(+) + H2O + H(+). The protein operates within sulfur metabolism; dibenzothiophene degradation. Functionally, catalyzes the second step of the '4S' desulfurization pathway that removes covalently bound sulfur from dibenzothiophene (DBT) without breaking carbon-carbon bonds. Metabolizes DBT-sulfone (DBTO2 or DBT 5,5-dioxide) to 2-(2'-hydroxyphenyl)benzene sulphinate (HBPS). The sequence is that of Dibenzothiophene-sulfone monooxygenase from Rhodococcus erythropolis (strain XP).